A 392-amino-acid chain; its full sequence is ER-bound oxygenase mpaB (392 aa).

Topologically, residues 1-21 are lumenal; sequence MSLPLPPALSELARALPYSRT. A helical transmembrane segment spans residues 22 to 41; that stretch reads QWLPIFVGFLIGYPILIRAL. Residues 42–392 are Cytoplasmic-facing; it reads RYKRHGEMKK…WSKYHATTND (351 aa). Residues 352–376 are disordered; it reads DLGQKKGPQGDPGNDEGIKDLKDGE. Residues 367–376 show a composition bias toward basic and acidic residues; sequence EGIKDLKDGE.

The protein belongs to the mpaB oxygenase family.

The protein localises to the endoplasmic reticulum membrane. The enzyme catalyses 4-farnesyl-3,5-dihydroxy-6-methylphthalide + AH2 + 2 O2 = (4E,8E)-10-(4,6-dihydroxy-7-methyl-3-oxo-1,3-dihydro-2-benzofuran-5-yl)-4,8-dimethyldeca-4,8-dienoate + acetone + A + H2O + H(+). It functions in the pathway secondary metabolite biosynthesis; terpenoid biosynthesis. In terms of biological role, ER-bound oxygenase; part of the gene cluster that mediates the biosynthesis of mycophenolic acid (MPA), the first isolated antibiotic natural product in the world obtained from a culture of Penicillium brevicompactum in 1893. MpaB catalyzes the oxidative cleavage the C19-C20 double bond in farnesyl-DHMP (FDHMP) to yield FDHMP-3C via a mycophenolic aldehyde intermediate. The first step of the pathway is the synthesis of 5-methylorsellinic acid (5MOA) by the cytosolic polyketide synthase mpaC. 5MOA is then converted to the phthalide compound 5,7-dihydroxy-4,6-dimethylphthalide (DHMP) by the endoplasmic reticulum-bound cytochrome P450 monooxygenase mpaDE. MpaDE first catalyzes hydroxylation of 5-MOA to 4,6-dihydroxy-2-(hydroxymethyl)-3-methylbenzoic acid (DHMB). MpaDE then acts as a lactone synthase that catalyzes the ring closure to convert DHMB into DHMP. The next step is the prenylation of DHMP by the Golgi apparatus-associated prenyltransferase mpaA to yield farnesyl-DHMP (FDHMP). The ER-bound oxygenase mpaB then mediates the oxidative cleavage the C19-C20 double bond in FDHMP to yield FDHMP-3C via a mycophenolic aldehyde intermediate. The O-methyltransferase mpaG catalyzes the methylation of FDHMP-3C to yield MFDHMP-3C. After the cytosolic methylation of FDHMP-3C, MFDHMP-3C enters into peroxisomes probably via free diffusion due to its low molecular weight. Upon a peroxisomal CoA ligation reaction, catalyzed by a beta-oxidation component enzyme acyl-CoA ligase ACL891, MFDHMP-3C-CoA would then be restricted to peroxisomes for the following beta-oxidation pathway steps. The peroxisomal beta-oxidation machinery than converts MFDHMP-3C-CoA into MPA_CoA, via a beta-oxidation chain-shortening process. Finally mpaH acts as a peroxisomal acyl-CoA hydrolase with high substrate specificity toward MPA-CoA to release the final product MPA. This chain is ER-bound oxygenase mpaB, found in Penicillium brevicompactum.